Here is a 109-residue protein sequence, read N- to C-terminus: Nucleoid-associated protein Ssed_2851 (109 aa).

The protein belongs to the YbaB/EbfC family. As to quaternary structure, homodimer.

Its subcellular location is the cytoplasm. The protein resides in the nucleoid. In terms of biological role, binds to DNA and alters its conformation. May be involved in regulation of gene expression, nucleoid organization and DNA protection. In Shewanella sediminis (strain HAW-EB3), this protein is Nucleoid-associated protein Ssed_2851.